The chain runs to 512 residues: DNA damage-binding protein CMR1 (512 aa).

The tract at residues 32–96 (SQIKREAGVE…IPNVNDNQLL (65 aa)) is disordered. The span at 34 to 46 (IKREAGVEDEHLD) shows a compositional bias: basic and acidic residues. Residues 47 to 60 (RKRKKKAGSAKKAV) are compositionally biased toward basic residues. WD repeat units follow at residues 189-230 (LTAE…PEDE), 241-281 (LFTK…SEEI), 289-329 (DDPL…TEIN), 333-373 (LSDK…NKPE), 390-429 (DSRLSVSAVSYSPMDETLVCNGYDDTIRLFDVSGTLPEDL), 442-481 (GRWTSILKARFKLNMDVFAIANMKRAIDIYTSSGVQLAHL), and 482-512 (PTATVPAVISWHPTQNWVVGGNSSGKAFLFT).

It belongs to the WD repeat DDB2/WDR76 family.

Functionally, DNA-binding protein that binds to both single- and double-stranded DNA. Binds preferentially to UV-damaged DNA. May be involved in DNA-metabolic processes. The protein is DNA damage-binding protein CMR1 of Kluyveromyces lactis (strain ATCC 8585 / CBS 2359 / DSM 70799 / NBRC 1267 / NRRL Y-1140 / WM37) (Yeast).